Reading from the N-terminus, the 299-residue chain is Lipoyl synthase 2 (299 aa).

Positions 43, 48, 54, 69, 73, 76, and 294 each coordinate [4Fe-4S] cluster. Residues 55–283 (YAAGTATFLL…GAVARDLGFA (229 aa)) form the Radical SAM core domain.

Belongs to the radical SAM superfamily. Lipoyl synthase family. Requires [4Fe-4S] cluster as cofactor.

Its subcellular location is the cytoplasm. It carries out the reaction [[Fe-S] cluster scaffold protein carrying a second [4Fe-4S](2+) cluster] + N(6)-octanoyl-L-lysyl-[protein] + 2 oxidized [2Fe-2S]-[ferredoxin] + 2 S-adenosyl-L-methionine + 4 H(+) = [[Fe-S] cluster scaffold protein] + N(6)-[(R)-dihydrolipoyl]-L-lysyl-[protein] + 4 Fe(3+) + 2 hydrogen sulfide + 2 5'-deoxyadenosine + 2 L-methionine + 2 reduced [2Fe-2S]-[ferredoxin]. It functions in the pathway protein modification; protein lipoylation via endogenous pathway; protein N(6)-(lipoyl)lysine from octanoyl-[acyl-carrier-protein]: step 2/2. Functionally, catalyzes the radical-mediated insertion of two sulfur atoms into the C-6 and C-8 positions of the octanoyl moiety bound to the lipoyl domains of lipoate-dependent enzymes, thereby converting the octanoylated domains into lipoylated derivatives. This Parasynechococcus marenigrum (strain WH8102) protein is Lipoyl synthase 2.